A 248-amino-acid polypeptide reads, in one-letter code: MRFPTPLIEGRLVRRYKRFLADVTLADGTMVTAHCANPGAMLGLNAEGFRVLLSPSTNPSRKLGYSWELVEAELPGGLQWVGINTARPNALVAEAFRENKLTPLIGYETLRPEVAYGKASRVDFLTSGGGLAPCHVEVKNCHLMRQAGLAEFPDCKAARSARHMEELAGVVTAGGRAMLIVVIQMRAGAFDVARDIDPVFDRALRMALEVGVEAYAYTCAVGPEGVAIDTPVPILTPGATLQPARTSG.

This sequence belongs to the SfsA family.

This Methylorubrum extorquens (strain PA1) (Methylobacterium extorquens) protein is Sugar fermentation stimulation protein homolog.